A 470-amino-acid polypeptide reads, in one-letter code: Regulator of microtubule dynamics protein 3 (470 aa).

Residues 1-12 (MSRLGALGGSRA) are Mitochondrial intermembrane-facing. A helical membrane pass occupies residues 13–35 (GLGLLLGTAAGLGFLCVLYSQRW). Residues 36-470 (KRTQRHGRSH…DLEELEVILG (435 aa)) lie on the Cytoplasmic side of the membrane. A phosphoserine mark is found at S44, S46, S50, and S57. A coiled-coil region spans residues 91–125 (LDRLDFVLTSLMALRREVEELQRSLQGLAGEIVGE). The FFAT signature appears at 157–163 (VYFTASS). Phosphothreonine is present on T160. The tract at residues 168-205 (TDAESEGGYTTANAESDYERDSDKESGDAEDEVSCETV) is disordered. Residues S183, S193, S212, and S233 each carry the phosphoserine modification. A compositionally biased stretch (basic and acidic residues) spans 184–194 (DYERDSDKESG).

This sequence belongs to the RMDN family. In terms of assembly, interacts with PTPN2. Interacts with microtubules. Interacts with VAPB. Interacts (via FFAT motif) with MOSPD2 (via MSP domain). Interacts (via phosphorylated FFAT motif) with MOSPD2, VAPA and VAPB. In terms of processing, phosphorylation at Thr-160 of the FFAT motif activates interaction with MOSPD2, VAPA and VAPB.

It is found in the mitochondrion outer membrane. The protein resides in the cytoplasm. Its subcellular location is the nucleus. The protein localises to the cytoskeleton. It localises to the spindle. It is found in the spindle pole. Its function is as follows. Involved in cellular calcium homeostasis regulation. May participate in differentiation and apoptosis of keratinocytes. Overexpression induces apoptosis. In Mus musculus (Mouse), this protein is Regulator of microtubule dynamics protein 3.